The primary structure comprises 298 residues: ATP phosphoribosyltransferase (298 aa).

The protein belongs to the ATP phosphoribosyltransferase family. Long subfamily. Mg(2+) serves as cofactor.

The protein resides in the cytoplasm. The enzyme catalyses 1-(5-phospho-beta-D-ribosyl)-ATP + diphosphate = 5-phospho-alpha-D-ribose 1-diphosphate + ATP. The protein operates within amino-acid biosynthesis; L-histidine biosynthesis; L-histidine from 5-phospho-alpha-D-ribose 1-diphosphate: step 1/9. With respect to regulation, feedback inhibited by histidine. Catalyzes the condensation of ATP and 5-phosphoribose 1-diphosphate to form N'-(5'-phosphoribosyl)-ATP (PR-ATP). Has a crucial role in the pathway because the rate of histidine biosynthesis seems to be controlled primarily by regulation of HisG enzymatic activity. In Aeromonas salmonicida (strain A449), this protein is ATP phosphoribosyltransferase.